The following is a 729-amino-acid chain: Fatty acid oxidation complex subunit alpha (729 aa).

The enoyl-CoA hydratase/isomerase stretch occupies residues 1 to 189 (MLYKGDTLYL…KIGLVDGVVK (189 aa)). D296 is a binding site for substrate. A 3-hydroxyacyl-CoA dehydrogenase region spans residues 311-729 (ETPKQAAVLG…ARPVGDLKTA (419 aa)). NAD(+) contacts are provided by residues M324, D343, 400–402 (VVE), K407, and S429. H450 acts as the For 3-hydroxyacyl-CoA dehydrogenase activity in catalysis. N453 lines the NAD(+) pocket. Substrate-binding residues include N500 and Y660. A disordered region spans residues 708–729 (RHNEPYYPPVEPARPVGDLKTA).

The protein in the N-terminal section; belongs to the enoyl-CoA hydratase/isomerase family. In the C-terminal section; belongs to the 3-hydroxyacyl-CoA dehydrogenase family. As to quaternary structure, heterotetramer of two alpha chains (FadB) and two beta chains (FadA).

It catalyses the reaction a (3S)-3-hydroxyacyl-CoA + NAD(+) = a 3-oxoacyl-CoA + NADH + H(+). It carries out the reaction a (3S)-3-hydroxyacyl-CoA = a (2E)-enoyl-CoA + H2O. The enzyme catalyses a 4-saturated-(3S)-3-hydroxyacyl-CoA = a (3E)-enoyl-CoA + H2O. The catalysed reaction is (3S)-3-hydroxybutanoyl-CoA = (3R)-3-hydroxybutanoyl-CoA. It catalyses the reaction a (3Z)-enoyl-CoA = a 4-saturated (2E)-enoyl-CoA. It carries out the reaction a (3E)-enoyl-CoA = a 4-saturated (2E)-enoyl-CoA. It participates in lipid metabolism; fatty acid beta-oxidation. Involved in the aerobic and anaerobic degradation of long-chain fatty acids via beta-oxidation cycle. Catalyzes the formation of 3-oxoacyl-CoA from enoyl-CoA via L-3-hydroxyacyl-CoA. It can also use D-3-hydroxyacyl-CoA and cis-3-enoyl-CoA as substrate. This Escherichia coli O6:H1 (strain CFT073 / ATCC 700928 / UPEC) protein is Fatty acid oxidation complex subunit alpha.